The primary structure comprises 177 residues: UPF0177 protein YxdF (177 aa).

The next 4 helical transmembrane spans lie at T2–L22, I30–L50, A117–I137, and I152–F172.

The protein belongs to the UPF0177 family.

It is found in the cell membrane. This is UPF0177 protein YxdF (yxdF) from Lactococcus lactis subsp. lactis (strain IL1403) (Streptococcus lactis).